Consider the following 193-residue polypeptide: Ion-translocating oxidoreductase complex subunit A (193 aa).

The next 6 helical transmembrane spans lie at 5–25 (LLLL…FLGL), 39–59 (IGMG…SYLM), 63–83 (ILIP…VIAV), 102–122 (LLGI…VALL), 134–154 (IIYG…FAAM), and 171–191 (SIAM…TGLI).

Belongs to the NqrDE/RnfAE family. As to quaternary structure, the complex is composed of six subunits: RnfA, RnfB, RnfC, RnfD, RnfE and RnfG.

The protein resides in the cell inner membrane. Part of a membrane-bound complex that couples electron transfer with translocation of ions across the membrane. The polypeptide is Ion-translocating oxidoreductase complex subunit A (Aeromonas hydrophila subsp. hydrophila (strain ATCC 7966 / DSM 30187 / BCRC 13018 / CCUG 14551 / JCM 1027 / KCTC 2358 / NCIMB 9240 / NCTC 8049)).